We begin with the raw amino-acid sequence, 460 residues long: Muscarinic acetylcholine receptor M1 (460 aa).

Residues 1–22 (MNTSAPPAVSPNITVLAPGKGP) lie on the Extracellular side of the membrane. Asn-2 and Asn-12 each carry an N-linked (GlcNAc...) asparagine glycan. The chain crosses the membrane as a helical span at residues 23 to 48 (WQVAFIGITTGLLSLATVTGNLLVLI). Residues 49–62 (SFKVNTELKTVNNY) are Cytoplasmic-facing. The chain crosses the membrane as a helical span at residues 63 to 84 (FLLSLACADLIIGTFSMNLYTT). The Extracellular portion of the chain corresponds to 85–95 (YLLMGHWALGT). The helical transmembrane segment at 96 to 121 (LACDLWLALDYVASNASVMNLLLISF) threads the bilayer. Cys-98 and Cys-178 form a disulfide bridge. The Cytoplasmic segment spans residues 122–142 (DRYFSVTRPLSYRAKRTPRRA). Residues 143-164 (ALMIGLAWLVSFVLWAPAILFW) form a helical membrane-spanning segment. Over 165–185 (QYLVGERTVLAGQCYIQFLSQ) the chain is Extracellular. A helical transmembrane segment spans residues 186–209 (PIITFGTAMAAFYLPVTVMCTLYW). The Cytoplasmic portion of the chain corresponds to 210-366 (RIYRETENRA…LVKEKKAART (157 aa)). Disordered regions lie at residues 225–259 (LQGS…PGRC), 273–297 (SWKE…EEPG), and 310–351 (EAQA…QLAK). Thr-230 is modified (phosphothreonine). The segment covering 238-247 (SSSSERSQPG) has biased composition (low complexity). The span at 328–343 (RPTKKGRDRAGKGQKP) shows a compositional bias: basic residues. The helical transmembrane segment at 367–390 (LSAILLAFILTWTPYNIMVLVSTF) threads the bilayer. The Extracellular portion of the chain corresponds to 391-401 (CKDCVPETLWE). A helical membrane pass occupies residues 402 to 420 (LGYWLCYVNSTINPMCYAL). Residues 421 to 460 (CNKAFRDTFRLLLLCRWDKRRWRKIPKRPGSVHRTPSRQC) are Cytoplasmic-facing. At Thr-428 the chain carries Phosphothreonine. Ser-451 carries the post-translational modification Phosphoserine. A Phosphothreonine modification is found at Thr-455. Phosphoserine is present on Ser-457.

Belongs to the G-protein coupled receptor 1 family. Muscarinic acetylcholine receptor subfamily. CHRM1 sub-subfamily. Interacts with GPRASP2. Interacts with TMEM147.

It is found in the cell membrane. The protein localises to the postsynaptic cell membrane. The muscarinic acetylcholine receptor mediates various cellular responses, including inhibition of adenylate cyclase, breakdown of phosphoinositides and modulation of potassium channels through the action of G proteins. Primary transducing effect is Pi turnover. This chain is Muscarinic acetylcholine receptor M1 (CHRM1), found in Macaca mulatta (Rhesus macaque).